A 50-amino-acid polypeptide reads, in one-letter code: Parvalbumin (50 aa).

Residues K38 to L50 form the EF-hand domain.

Belongs to the parvalbumin family.

In terms of biological role, probably regulates the activity of the caudal neurosecretory system. Binds two calcium ions. In Scyliorhinus canicula (Small-spotted catshark), this protein is Parvalbumin.